Here is a 143-residue protein sequence, read N- to C-terminus: Histone H2B.2, sperm (143 aa).

A disordered region spans residues 1–52 (MPRSPSKSSPRKGSPRKGSPRKGSPKRGGKGAKRAGKGGRRRNVVKRRRRRR). Short sequence motifs (SPKK motif) lie at residues 4–7 (SPSK), 9–12 (SPRK), 14–17 (SPRK), 19–22 (SPRK), and 24–27 (SPKR). A compositionally biased stretch (basic residues) spans 9–52 (SPRKGSPRKGSPRKGSPKRGGKGAKRAGKGGRRRNVVKRRRRRR). A phosphoserine mark is found at Ser-14, Ser-19, and Ser-24. O-linked (GlcNAc) serine glycosylation is present at Ser-130. A Glycyl lysine isopeptide (Lys-Gly) (interchain with G-Cter in ubiquitin) cross-link involves residue Lys-138.

The protein belongs to the histone H2B family. In terms of assembly, the nucleosome is a histone octamer containing two molecules each of H2A, H2B, H3 and H4 assembled in one H3-H4 heterotetramer and two H2A-H2B heterodimers. The octamer wraps approximately 147 bp of DNA. Monoubiquitination of Lys-138 gives a specific tag for epigenetic transcriptional activation and is also prerequisite for histone H3 'Lys-4' and 'Lys-79' methylation. In terms of processing, phosphorylated on SPKK motifs 3, 4 and 5; which may regulate DNA binding. Dephosphorylated during maturation of spermatids to mature sperm and rephosphorylated at fertilization. Post-translationally, glcNAcylation at Ser-130 promotes monoubiquitination of Lys-138. It fluctuates in response to extracellular glucose, and associates with transcribed genes. In terms of tissue distribution, testis-specific.

The protein localises to the nucleus. It is found in the chromosome. Functionally, core component of nucleosome. Nucleosomes wrap and compact DNA into chromatin, limiting DNA accessibility to the cellular machineries which require DNA as a template. Histones thereby play a central role in transcription regulation, DNA repair, DNA replication and chromosomal stability. DNA accessibility is regulated via a complex set of post-translational modifications of histones, also called histone code, and nucleosome remodeling. The polypeptide is Histone H2B.2, sperm (Lytechinus pictus (Painted sea urchin)).